Here is a 126-residue protein sequence, read N- to C-terminus: Adenosine 5'-monophosphoramidase HINT1 (126 aa).

A2 is subject to N-acetylalanine. The HIT domain maps to I18–G126. Residues K21 and K30 each carry the N6-acetyllysine modification. AMP is bound at residue D43–I44. A phosphoserine mark is found at S45 and S72. AMP contacts are provided by residues N99, G105–S107, and H112–H114. The Histidine triad motif motif lies at H110–H114. The Tele-AMP-histidine intermediate role is filled by H112.

The protein belongs to the HINT family. As to quaternary structure, homodimer. Interacts with CDK7. Interacts with RUVBL1 and RUVBL2 and is associated with the LEF1/TCF1-CTNNB1 complex and with a KAT5 histone acetyltransferase complex. Identified in a complex with MITF and CTNNB1. Interacts with CDC34 and RBX1, and is part of a SCF (SKP2-CUL1-F-box protein) E3 ubiquitin-protein ligase complex. Interacts with SUMO1, SUMO2 and RGS17. Interacts with the Ten-1 ICD form of TENM1. Interacts with CALM1; interaction increases in the presence of calcium ions. In terms of tissue distribution, widely expressed.

Its subcellular location is the cytoplasm. It localises to the nucleus. The catalysed reaction is adenosine 5'-phosphoramidate + H2O = AMP + NH4(+). In terms of biological role, exhibits adenosine 5'-monophosphoramidase activity, hydrolyzing purine nucleotide phosphoramidates with a single phosphate group such as adenosine 5'monophosphoramidate (AMP-NH2) to yield AMP and NH2. Hydrolyzes adenosine 5'monophosphomorpholidate (AMP-morpholidate) and guanosine 5'monophosphomorpholidate (GMP-morpholidate). Hydrolyzes lysyl-AMP (AMP-N-epsilon-(N-alpha-acetyl lysine methyl ester)) generated by lysine tRNA ligase, as well as Met-AMP, His-AMP and Asp-AMP, lysyl-GMP (GMP-N-epsilon-(N-alpha-acetyl lysine methyl ester)) and AMP-N-alanine methyl ester. Hydrolyzes 3-indolepropionic acyl-adenylate, tryptamine adenosine phosphoramidate monoester and other fluorogenic purine nucleoside tryptamine phosphoramidates in vitro. Can also convert adenosine 5'-O-phosphorothioate and guanosine 5'-O-phosphorothioate to the corresponding nucleoside 5'-O-phosphates with concomitant release of hydrogen sulfide. In addition, functions as scaffolding protein that modulates transcriptional activation by the LEF1/TCF1-CTNNB1 complex and by the complex formed with MITF and CTNNB1. Modulates p53/TP53 levels and p53/TP53-mediated apoptosis. Modulates proteasomal degradation of target proteins by the SCF (SKP2-CUL1-F-box protein) E3 ubiquitin-protein ligase complex. Also exhibits SUMO-specific isopeptidase activity, deconjugating SUMO1 from RGS17. Deconjugates SUMO1 from RANGAP1. The polypeptide is Adenosine 5'-monophosphoramidase HINT1 (HINT1) (Homo sapiens (Human)).